Reading from the N-terminus, the 326-residue chain is Transcription cofactor vestigial-like protein 3 (326 aa).

The interval 54-82 is disordered; it reads SLEVTLPSKQEEEEEEEEDEEEEEKDQPA. Residue lysine 62 forms a Glycyl lysine isopeptide (Lys-Gly) (interchain with G-Cter in SUMO2) linkage. Positions 64–78 are enriched in acidic residues; that stretch reads EEEEEEEEDEEEEEK. A Glycyl lysine isopeptide (Lys-Gly) (interchain with G-Cter in SUMO2) cross-link involves residue lysine 129. Residues 184 to 208 form a disordered region; sequence TADPNSWPGHGLHQTGPAPPPTASE.

The protein belongs to the vestigial family.

It is found in the nucleus. In terms of biological role, may act as a specific coactivator for the mammalian TEFs. The protein is Transcription cofactor vestigial-like protein 3 of Mus musculus (Mouse).